A 509-amino-acid polypeptide reads, in one-letter code: tRNA (guanine(37)-N(1))-methyltransferase (509 aa).

S-adenosyl-L-methionine-binding positions include H289, 327–328, 355–356, and N387; these read DL and DG. Positions 478–509 are disordered; sequence TRNPENHEDPPLKRQRTAEAFSDEKTQIVSNT.

This sequence belongs to the class I-like SAM-binding methyltransferase superfamily. TRM5/TYW2 family. Monomer.

It localises to the mitochondrion matrix. Its subcellular location is the nucleus. It is found in the cytoplasm. The enzyme catalyses guanosine(37) in tRNA + S-adenosyl-L-methionine = N(1)-methylguanosine(37) in tRNA + S-adenosyl-L-homocysteine + H(+). Its function is as follows. Involved in mitochondrial tRNA methylation. Specifically methylates the N1 position of guanosine-37 in various tRNAs. Methylation is not dependent on the nature of the nucleoside 5' of the target nucleoside. This is the first step in the biosynthesis of wybutosine (yW), a modified base adjacent to the anticodon of tRNAs and required for accurate decoding. The chain is tRNA (guanine(37)-N(1))-methyltransferase from Homo sapiens (Human).